Reading from the N-terminus, the 99-residue chain is NADH-quinone oxidoreductase subunit K (99 aa).

Transmembrane regions (helical) follow at residues 3–23 (PANYLILSALLFTIGTVGVLV), 28–48 (IVVFMSIELMLNAVNLTLVTF), and 59–79 (VMAFFVMVVAAAEVVIGLAII).

This sequence belongs to the complex I subunit 4L family. As to quaternary structure, NDH-1 is composed of 14 different subunits. Subunits NuoA, H, J, K, L, M, N constitute the membrane sector of the complex.

Its subcellular location is the cell membrane. It catalyses the reaction a quinone + NADH + 5 H(+)(in) = a quinol + NAD(+) + 4 H(+)(out). Functionally, NDH-1 shuttles electrons from NADH, via FMN and iron-sulfur (Fe-S) centers, to quinones in the respiratory chain. The immediate electron acceptor for the enzyme in this species is believed to be a menaquinone. Couples the redox reaction to proton translocation (for every two electrons transferred, four hydrogen ions are translocated across the cytoplasmic membrane), and thus conserves the redox energy in a proton gradient. This Frankia alni (strain DSM 45986 / CECT 9034 / ACN14a) protein is NADH-quinone oxidoreductase subunit K.